A 1079-amino-acid chain; its full sequence is Carbamoyl phosphate synthase large chain (1079 aa).

Positions P2–E403 are carboxyphosphate synthetic domain. Residues R129, R169, G175, G176, E208, L210, E215, G241, I242, H243, Q285, and E299 each coordinate ATP. The 196-residue stretch at E133–I328 folds into the ATP-grasp 1 domain. Positions 285, 299, and 301 each coordinate Mg(2+). 3 residues coordinate Mn(2+): Q285, E299, and N301. The interval V404–S553 is oligomerization domain. The interval H554–H936 is carbamoyl phosphate synthetic domain. The ATP-grasp 2 domain occupies Q679 to C870. ATP-binding residues include R715, Q754, L756, E761, G786, V787, H788, S789, Q829, and E841. Residues Q829, E841, and N843 each coordinate Mg(2+). Residues Q829, E841, and N843 each coordinate Mn(2+). The MGS-like domain maps to T937–K1079. An allosteric domain region spans residues T937–K1079.

Belongs to the CarB family. Composed of two chains; the small (or glutamine) chain promotes the hydrolysis of glutamine to ammonia, which is used by the large (or ammonia) chain to synthesize carbamoyl phosphate. Tetramer of heterodimers (alpha,beta)4. Requires Mg(2+) as cofactor. Mn(2+) is required as a cofactor.

The catalysed reaction is hydrogencarbonate + L-glutamine + 2 ATP + H2O = carbamoyl phosphate + L-glutamate + 2 ADP + phosphate + 2 H(+). It catalyses the reaction hydrogencarbonate + NH4(+) + 2 ATP = carbamoyl phosphate + 2 ADP + phosphate + 2 H(+). It participates in amino-acid biosynthesis; L-arginine biosynthesis; carbamoyl phosphate from bicarbonate: step 1/1. It functions in the pathway pyrimidine metabolism; UMP biosynthesis via de novo pathway; (S)-dihydroorotate from bicarbonate: step 1/3. Large subunit of the glutamine-dependent carbamoyl phosphate synthetase (CPSase). CPSase catalyzes the formation of carbamoyl phosphate from the ammonia moiety of glutamine, carbonate, and phosphate donated by ATP, constituting the first step of 2 biosynthetic pathways, one leading to arginine and/or urea and the other to pyrimidine nucleotides. The large subunit (synthetase) binds the substrates ammonia (free or transferred from glutamine from the small subunit), hydrogencarbonate and ATP and carries out an ATP-coupled ligase reaction, activating hydrogencarbonate by forming carboxy phosphate which reacts with ammonia to form carbamoyl phosphate. The protein is Carbamoyl phosphate synthase large chain of Buchnera aphidicola subsp. Acyrthosiphon pisum (strain APS) (Acyrthosiphon pisum symbiotic bacterium).